We begin with the raw amino-acid sequence, 653 residues long: MAEPLLQLTRVTRRFPAGDKDVVVLDDVSLSIDAGEIVAIVGASGSGKSTLMNILGCLDHPSSGSYRVGARETSELESDELARLRREHFGFIFQRYHLLPHLSAAENVEMPAVYAGSAQAQRRERALMLLARLGLSDRAGHRPSQLSGGQQQRVSIARALMNGGEVILADEPTGALDSKSGHDVIRVLRELNALGHTVIIVTHDENVAAHARRIIEISDGRIVGDRLNPHADGADAASGASGDAGPQRARRLSAGVGRFAEAFRMAWIALVSHRLRTLLTMLGIIIGITSVVSIVAIGEGAKRYMLDEIGSIGTNTINVYPGADWGDSRADAIQTLVPADAAALADQIYVDSATPETSRSLLLRYRNIDVNALVSGVGERFFQVRGMKMAQGIAFGPDEVRRQAQVAVIDENTRRKLFGANPNPLGEVILIDNLPCIVIGVTAAKKSAFGDTKNLNVWVPYTTASGRLFGQRHLDSITVRVRDGQPSAAAEQSLTKLMLQRHGRKDFFTYNMDSVVKTVEKTGQSLTLLLSLIAVISLVVGGIGVMNIMLVSVTERTREIGIRMAVGARQADIMQQFLVEAVTVCLMGGAIGIVLSLGMSFVFSLFVDQWKMVFSAGSIVSAFLCSTLIGVVFGFMPARNASRLDPIDALARD.

Positions 6 to 244 (LQLTRVTRRF…DAASGASGDA (239 aa)) constitute an ABC transporter domain. Residue 42 to 49 (GASGSGKS) participates in ATP binding. 4 helical membrane passes run 278–298 (LLTM…VAIG), 526–546 (LTLL…IGVM), 587–607 (MGGA…SLFV), and 616–636 (AGSI…FGFM).

Belongs to the ABC transporter superfamily. Macrolide exporter (TC 3.A.1.122) family. In terms of assembly, homodimer.

It is found in the cell inner membrane. Non-canonical ABC transporter that contains transmembrane domains (TMD), which form a pore in the inner membrane, and an ATP-binding domain (NBD), which is responsible for energy generation. Confers resistance against macrolides. The polypeptide is Macrolide export ATP-binding/permease protein MacB (Burkholderia thailandensis (strain ATCC 700388 / DSM 13276 / CCUG 48851 / CIP 106301 / E264)).